Here is a 341-residue protein sequence, read N- to C-terminus: UDP-3-O-acylglucosamine N-acyltransferase (341 aa).

Residue His-241 is the Proton acceptor of the active site.

The protein belongs to the transferase hexapeptide repeat family. LpxD subfamily. Homotrimer.

The enzyme catalyses a UDP-3-O-[(3R)-3-hydroxyacyl]-alpha-D-glucosamine + a (3R)-hydroxyacyl-[ACP] = a UDP-2-N,3-O-bis[(3R)-3-hydroxyacyl]-alpha-D-glucosamine + holo-[ACP] + H(+). Its pathway is bacterial outer membrane biogenesis; LPS lipid A biosynthesis. Its function is as follows. Catalyzes the N-acylation of UDP-3-O-acylglucosamine using 3-hydroxyacyl-ACP as the acyl donor. Is involved in the biosynthesis of lipid A, a phosphorylated glycolipid that anchors the lipopolysaccharide to the outer membrane of the cell. The chain is UDP-3-O-acylglucosamine N-acyltransferase from Christiangramia forsetii (strain DSM 17595 / CGMCC 1.15422 / KT0803) (Gramella forsetii).